The primary structure comprises 386 residues: Rhomboid domain-containing protein 3 (386 aa).

A run of 5 helical transmembrane segments spans residues 20–40, 58–78, 92–112, 141–161, and 163–183; these read VLML…LVLA, LGHT…TVGW, ASAL…GLGL, GALP…LLSS, and PPFL…AGAF. The region spanning 324–362 is the UBA domain; the sequence is VSSLRLQQLERMGFPTEQAVVALAATGRVEGAVSLLVGG.

Its subcellular location is the membrane. This Homo sapiens (Human) protein is Rhomboid domain-containing protein 3 (RHBDD3).